Reading from the N-terminus, the 429-residue chain is Histidinol dehydrogenase (429 aa).

Positions 130, 191, and 214 each coordinate NAD(+). Residues Ser237, Gln259, and His262 each contribute to the substrate site. Positions 259 and 262 each coordinate Zn(2+). Residues Glu327 and His328 each act as proton acceptor in the active site. Residues His328, Asp361, Glu415, and His420 each contribute to the substrate site. Zn(2+) is bound at residue Asp361. Zn(2+) is bound at residue His420.

Belongs to the histidinol dehydrogenase family. Zn(2+) serves as cofactor.

The enzyme catalyses L-histidinol + 2 NAD(+) + H2O = L-histidine + 2 NADH + 3 H(+). It functions in the pathway amino-acid biosynthesis; L-histidine biosynthesis; L-histidine from 5-phospho-alpha-D-ribose 1-diphosphate: step 9/9. Its function is as follows. Catalyzes the sequential NAD-dependent oxidations of L-histidinol to L-histidinaldehyde and then to L-histidine. The sequence is that of Histidinol dehydrogenase from Nitrobacter winogradskyi (strain ATCC 25391 / DSM 10237 / CIP 104748 / NCIMB 11846 / Nb-255).